The following is a 274-amino-acid chain: Nitrogenase iron protein (274 aa).

8–15 contributes to the ATP binding site; the sequence is GKGGIGKS. Cys-94 provides a ligand contact to [4Fe-4S] cluster. At Arg-97 the chain carries ADP-ribosylarginine; by dinitrogenase reductase ADP-ribosyltransferase. Cys-131 contacts [4Fe-4S] cluster.

Belongs to the NifH/BchL/ChlL family. In terms of assembly, homodimer. It depends on [4Fe-4S] cluster as a cofactor. Post-translationally, the reversible ADP-ribosylation of Arg-97 inactivates the nitrogenase reductase and regulates nitrogenase activity.

The catalysed reaction is N2 + 8 reduced [2Fe-2S]-[ferredoxin] + 16 ATP + 16 H2O = H2 + 8 oxidized [2Fe-2S]-[ferredoxin] + 2 NH4(+) + 16 ADP + 16 phosphate + 6 H(+). Functionally, the key enzymatic reactions in nitrogen fixation are catalyzed by the nitrogenase complex, which has 2 components: the iron protein and the molybdenum-iron protein. The polypeptide is Nitrogenase iron protein (Azobacteroides pseudotrichonymphae genomovar. CFP2).